Consider the following 338-residue polypeptide: Cytochrome c biogenesis protein CcsA (338 aa).

The next 8 membrane-spanning stretches (helical) occupy residues 15-35, 36-56, 71-91, 97-117, 142-162, 246-266, 273-293, and 307-327; these read FLVLFLTMLLYWGGAAFPNIP, GLTGLGTLGVAIANLCMATLL, LYESLFFLAWGVTTMHLVAEW, WVGVITAPVAMGITAFAALSL, VMMISYAALLVGSLLAIAFLI, IIGLGFPLLTIGIIAGAVWAN, WSWDPKETWALITWLVFAAYL, and AFLAAAGFFVVWVCYLGVNIL.

It belongs to the CcmF/CycK/Ccl1/NrfE/CcsA family. May interact with ccs1.

It is found in the cellular thylakoid membrane. Functionally, required during biogenesis of c-type cytochromes (cytochrome c6 and cytochrome f) at the step of heme attachment. This Picosynechococcus sp. (strain ATCC 27264 / PCC 7002 / PR-6) (Agmenellum quadruplicatum) protein is Cytochrome c biogenesis protein CcsA.